A 156-amino-acid chain; its full sequence is Probable cyclic pyranopterin monophosphate synthase (156 aa).

Substrate-binding positions include 74–76 (MCH) and 110–111 (ME). Residue Asp-125 is part of the active site.

The protein belongs to the MoaC family. As to quaternary structure, homohexamer; trimer of dimers.

The enzyme catalyses (8S)-3',8-cyclo-7,8-dihydroguanosine 5'-triphosphate = cyclic pyranopterin phosphate + diphosphate. The protein operates within cofactor biosynthesis; molybdopterin biosynthesis. Functionally, catalyzes the conversion of (8S)-3',8-cyclo-7,8-dihydroguanosine 5'-triphosphate to cyclic pyranopterin monophosphate (cPMP). The chain is Probable cyclic pyranopterin monophosphate synthase from Methanospirillum hungatei JF-1 (strain ATCC 27890 / DSM 864 / NBRC 100397 / JF-1).